We begin with the raw amino-acid sequence, 122 residues long: Large ribosomal subunit protein uL14 (122 aa).

The protein belongs to the universal ribosomal protein uL14 family. As to quaternary structure, part of the 50S ribosomal subunit. Forms a cluster with proteins L3 and L19. In the 70S ribosome, L14 and L19 interact and together make contacts with the 16S rRNA in bridges B5 and B8.

Functionally, binds to 23S rRNA. Forms part of two intersubunit bridges in the 70S ribosome. In Alkaliphilus metalliredigens (strain QYMF), this protein is Large ribosomal subunit protein uL14.